Reading from the N-terminus, the 807-residue chain is Leucine--tRNA ligase (807 aa).

A 'HIGH' region motif is present at residues 40–51 (PYPSGSGLHVGH). A 'KMSKS' region motif is present at residues 576–580 (KMSKS). K579 is a binding site for ATP.

It belongs to the class-I aminoacyl-tRNA synthetase family.

The protein resides in the cytoplasm. It carries out the reaction tRNA(Leu) + L-leucine + ATP = L-leucyl-tRNA(Leu) + AMP + diphosphate. The chain is Leucine--tRNA ligase from Chlorobaculum parvum (strain DSM 263 / NCIMB 8327) (Chlorobium vibrioforme subsp. thiosulfatophilum).